The chain runs to 444 residues: Glutamyl-tRNA reductase (444 aa).

Substrate contacts are provided by residues 49 to 52, Ser-109, 114 to 116, and Gln-120; these read TCNR and ETQ. Catalysis depends on Cys-50, which acts as the Nucleophile. 189–194 is an NADP(+) binding site; that stretch reads GAGKMG.

It belongs to the glutamyl-tRNA reductase family. In terms of assembly, homodimer.

It catalyses the reaction (S)-4-amino-5-oxopentanoate + tRNA(Glu) + NADP(+) = L-glutamyl-tRNA(Glu) + NADPH + H(+). Its pathway is porphyrin-containing compound metabolism; protoporphyrin-IX biosynthesis; 5-aminolevulinate from L-glutamyl-tRNA(Glu): step 1/2. In terms of biological role, catalyzes the NADPH-dependent reduction of glutamyl-tRNA(Glu) to glutamate 1-semialdehyde (GSA). The protein is Glutamyl-tRNA reductase of Bacillus anthracis (strain A0248).